Reading from the N-terminus, the 466-residue chain is Phosphomethylpyrimidine synthase (466 aa).

Substrate contacts are provided by residues asparagine 80, methionine 109, tyrosine 139, histidine 175, 195 to 197, 236 to 239, and glutamate 275; these read SRG and DSLR. Histidine 279 lines the Zn(2+) pocket. Residue tyrosine 302 participates in substrate binding. Zn(2+) is bound at residue histidine 343. [4Fe-4S] cluster-binding residues include cysteine 423, cysteine 426, and cysteine 431.

Belongs to the ThiC family. Requires [4Fe-4S] cluster as cofactor.

It catalyses the reaction 5-amino-1-(5-phospho-beta-D-ribosyl)imidazole + S-adenosyl-L-methionine = 4-amino-2-methyl-5-(phosphooxymethyl)pyrimidine + CO + 5'-deoxyadenosine + formate + L-methionine + 3 H(+). It functions in the pathway cofactor biosynthesis; thiamine diphosphate biosynthesis. Catalyzes the synthesis of the hydroxymethylpyrimidine phosphate (HMP-P) moiety of thiamine from aminoimidazole ribotide (AIR) in a radical S-adenosyl-L-methionine (SAM)-dependent reaction. This is Phosphomethylpyrimidine synthase from Synechococcus sp. (strain RCC307).